The chain runs to 249 residues: Ubiquinone biosynthesis O-methyltransferase (249 aa).

S-adenosyl-L-methionine is bound by residues Arg41, Gly72, Asp93, and Met136.

The protein belongs to the methyltransferase superfamily. UbiG/COQ3 family.

The enzyme catalyses a 3-demethylubiquinol + S-adenosyl-L-methionine = a ubiquinol + S-adenosyl-L-homocysteine + H(+). It catalyses the reaction a 3-(all-trans-polyprenyl)benzene-1,2-diol + S-adenosyl-L-methionine = a 2-methoxy-6-(all-trans-polyprenyl)phenol + S-adenosyl-L-homocysteine + H(+). It functions in the pathway cofactor biosynthesis; ubiquinone biosynthesis. Functionally, O-methyltransferase that catalyzes the 2 O-methylation steps in the ubiquinone biosynthetic pathway. The protein is Ubiquinone biosynthesis O-methyltransferase of Methylobacterium nodulans (strain LMG 21967 / CNCM I-2342 / ORS 2060).